The following is a 185-amino-acid chain: MSEHNPYGTMHATTIITVRKGGKVVMAGDGQVSLGQTVMKGNARKVRRLSKGDVIAGFAGATADAFTLLERLEAKLEQYPDQLMRAAVELAKDWRTNKYLRNLEAMMLVADKSVTLAITGNGDVLEPEHGTIAIGSGGNYAFAAARALMDSDKSAEEIARRALQIAGDICVYTNHNVVMETLDAD.

Residue threonine 13 is part of the active site. The Na(+) site is built by glycine 167, cysteine 170, and threonine 173.

This sequence belongs to the peptidase T1B family. HslV subfamily. A double ring-shaped homohexamer of HslV is capped on each side by a ring-shaped HslU homohexamer. The assembly of the HslU/HslV complex is dependent on binding of ATP.

The protein localises to the cytoplasm. The catalysed reaction is ATP-dependent cleavage of peptide bonds with broad specificity.. Its activity is regulated as follows. Allosterically activated by HslU binding. In terms of biological role, protease subunit of a proteasome-like degradation complex believed to be a general protein degrading machinery. This is ATP-dependent protease subunit HslV from Sinorhizobium fredii (strain NBRC 101917 / NGR234).